The primary structure comprises 180 residues: Large ribosomal subunit protein bL17 (180 aa).

The disordered stretch occupies residues 134 to 180; sequence AQAKAKKAAAMPTEESEAKPAEEGDVVGASEPDAKAPEEPPAEAPEN.

Belongs to the bacterial ribosomal protein bL17 family. In terms of assembly, part of the 50S ribosomal subunit. Contacts protein L32.

This Mycobacterium tuberculosis (strain ATCC 25177 / H37Ra) protein is Large ribosomal subunit protein bL17.